A 343-amino-acid polypeptide reads, in one-letter code: Dihydroorotase (343 aa).

Residues H13 and H15 each contribute to the Zn(2+) site. Substrate is bound by residues 15–17 and N41; that span reads HLR. Positions 99, 136, and 174 each coordinate Zn(2+). K99 carries the N6-carboxylysine modification. H136 provides a ligand contact to substrate. A substrate-binding site is contributed by L219. Zn(2+) is bound at residue D247. The active site involves D247. H251 and A263 together coordinate substrate.

The protein belongs to the metallo-dependent hydrolases superfamily. DHOase family. Class II DHOase subfamily. As to quaternary structure, homodimer. The cofactor is Zn(2+).

It carries out the reaction (S)-dihydroorotate + H2O = N-carbamoyl-L-aspartate + H(+). The protein operates within pyrimidine metabolism; UMP biosynthesis via de novo pathway; (S)-dihydroorotate from bicarbonate: step 3/3. Catalyzes the reversible cyclization of carbamoyl aspartate to dihydroorotate. This is Dihydroorotase from Shewanella baltica (strain OS195).